Here is a 183-residue protein sequence, read N- to C-terminus: Outer membrane protein H.8 (183 aa).

The signal sequence occupies residues 1–17; it reads MKAYLALISAAVIGLAA. A lipid anchor (N-palmitoyl cysteine) is attached at Cys18. Residue Cys18 is the site of S-diacylglycerol cysteine attachment. Positions 27 to 51 are disordered; sequence AEATPAAEAPASEAPAAEAAPADAA. The Plastocyanin-like domain occupies 57-183; it reads GNCAATVESN…LMNGKVTLVD (127 aa). His102, Cys166, His171, and Met175 together coordinate Cu cation.

The cofactor is Cu cation.

The protein resides in the cell outer membrane. The chain is Outer membrane protein H.8 from Neisseria meningitidis serogroup B (strain ATCC BAA-335 / MC58).